The chain runs to 724 residues: MSNRWDSGVVRALAEARHGDAFAVLGAHPSDKGRLLRTYLPGADRVGAVLDDGQVVALDAGPEPGLFAGELPAHGGYRLRIGWPGGEQETADPYAFGPQLSDFDLHLISEGHHLQLADALGANVVEVEGVRGTRFAVWAPNASRVAVVGDFNSWDARRHPMRLRHQSGVWELFVPDVGPGAHYKYQLRGPHGHELPAKADPVARRAELAPGTASIVADPTPHQWSDDGWMATRARRQAHDAPMSIYEIHAGSWLREAGVDLDWDGLADRLIPYVADMGFTHVELMPVSEHPFGGSWGYQPLGLFAPTARFGTPDGFARFVDRCHREGIGVIVDWVPAHFPTDAHGLAHFDGTALYEHADPREGFHRDWNTLIYNHGRREVSGFLIASAMEFLQRYHVDGLRVDAVASMLYRDYSRNAGEWIPNIHGGRENYETIAFLRRLNEVVREHTPGAVMIAEESTAFPGVTAEVAHGGLGFHYKWNMGWMHDTLHYAGLDPIYRRYHHGELTFSMVYAYSERFVLPISHDEVVHGKGSLLGRMPGDDWQRFANLRAYLGFMFTHPGRKLLFMGCEFGQPTEWNHDAGLPWHLLDDPRHRGVQTLVRDLNRLYVQYPALHAHDDDPSGFAWVVGDDAGNSVVAFLRKGKRGDAPVLVVINFTPVVQHAYRIGVPQGGQWREVFNSDAGIYGGSNLGNGGSVTAEQQSMHGHAQSLPLLLPPLGAIVLTPYG.

The active-site Nucleophile is the Asp403. The active-site Proton donor is the Glu456.

Belongs to the glycosyl hydrolase 13 family. GlgB subfamily. Monomer.

The catalysed reaction is Transfers a segment of a (1-&gt;4)-alpha-D-glucan chain to a primary hydroxy group in a similar glucan chain.. It participates in glycan biosynthesis; glycogen biosynthesis. Its function is as follows. Catalyzes the formation of the alpha-1,6-glucosidic linkages in glycogen by scission of a 1,4-alpha-linked oligosaccharide from growing alpha-1,4-glucan chains and the subsequent attachment of the oligosaccharide to the alpha-1,6 position. This Xanthomonas axonopodis pv. citri (strain 306) protein is 1,4-alpha-glucan branching enzyme GlgB 1 (glgB1).